The sequence spans 263 residues: Indole-3-glycerol phosphate synthase (263 aa).

It belongs to the TrpC family.

It carries out the reaction 1-(2-carboxyphenylamino)-1-deoxy-D-ribulose 5-phosphate + H(+) = (1S,2R)-1-C-(indol-3-yl)glycerol 3-phosphate + CO2 + H2O. The protein operates within amino-acid biosynthesis; L-tryptophan biosynthesis; L-tryptophan from chorismate: step 4/5. This chain is Indole-3-glycerol phosphate synthase, found in Polaromonas naphthalenivorans (strain CJ2).